The sequence spans 363 residues: HAUS augmin-like complex subunit 4 (363 aa).

This sequence belongs to the HAUS4 family. Component of the HAUS augmin-like complex. The complex interacts with the gamma-tubulin ring complex and this interaction is required for spindle assembly. Interacts with EML3 (phosphorylated at 'Thr-881').

Its subcellular location is the cytoplasm. The protein resides in the cytoskeleton. It localises to the microtubule organizing center. It is found in the centrosome. The protein localises to the spindle. Functionally, contributes to mitotic spindle assembly, maintenance of centrosome integrity and completion of cytokinesis as part of the HAUS augmin-like complex. The sequence is that of HAUS augmin-like complex subunit 4 (HAUS4) from Homo sapiens (Human).